The following is a 953-amino-acid chain: Isoleucine--tRNA ligase (953 aa).

A 'HIGH' region motif is present at residues 58–68; it reads PYANGNIHLGH. E565 contacts L-isoleucyl-5'-AMP. A 'KMSKS' region motif is present at residues 606-610; it reads KMSKS. K609 provides a ligand contact to ATP. Zn(2+) contacts are provided by C916, C919, C936, and C939.

This sequence belongs to the class-I aminoacyl-tRNA synthetase family. IleS type 1 subfamily. As to quaternary structure, monomer. The cofactor is Zn(2+).

It is found in the cytoplasm. It carries out the reaction tRNA(Ile) + L-isoleucine + ATP = L-isoleucyl-tRNA(Ile) + AMP + diphosphate. Functionally, catalyzes the attachment of isoleucine to tRNA(Ile). As IleRS can inadvertently accommodate and process structurally similar amino acids such as valine, to avoid such errors it has two additional distinct tRNA(Ile)-dependent editing activities. One activity is designated as 'pretransfer' editing and involves the hydrolysis of activated Val-AMP. The other activity is designated 'posttransfer' editing and involves deacylation of mischarged Val-tRNA(Ile). In Colwellia psychrerythraea (strain 34H / ATCC BAA-681) (Vibrio psychroerythus), this protein is Isoleucine--tRNA ligase.